Consider the following 200-residue polypeptide: Nucleoplasmin (200 aa).

Ala-2 carries the post-translational modification N-acetylalanine. Residue Ser-3 is modified to Phosphoserine. Thr-4 carries the post-translational modification Phosphothreonine. The residue at position 6 (Ser-6) is a Phosphoserine. Thr-8 is modified (phosphothreonine). The interval 35-39 is acidic tract A1; sequence EDDEE. Over residues 123 to 148 the composition is skewed to acidic residues; the sequence is DYSWAEEEDEGEAEGEEEEEEEEDQE. A disordered region spans residues 123-200; it reads DYSWAEEEDE…GRGRKPAAKK (78 aa). An acidic tract A2 region spans residues 128–148; it reads EEEDEGEAEGEEEEEEEEDQE. The residue at position 149 (Ser-149) is a Phosphoserine. Positions 153 to 170 are enriched in basic residues; that stretch reads AVKRPAATKKAGQAKKKK. The Bipartite nuclear localization signal motif lies at 155–170; sequence KRPAATKKAGQAKKKK. Residues 174-176 are acidic tract A3; that stretch reads EDE. Ser-177, Ser-178, and Ser-182 each carry phosphoserine. Over residues 185–200 the composition is skewed to basic residues; sequence KKGKGAGRGRKPAAKK. At Arg-192 the chain carries Omega-N-methylarginine; by PRMT5; alternate. Arg-192 is modified (symmetric dimethylarginine; by PRMT5; alternate).

This sequence belongs to the nucleoplasmin family. Homopentamer, when bound to H2A-H2B dimers only. Homodecamer of two stacked pentamers, when bound to H2A-H2B dimers and H3-H4 tetramers simultaneously. Interacts with the heterotetramer formed by wdr77 and prmt5. Activated by phosphorylation of multiple serine/threonine residues, along both core and tail domains. The level of phosphorylation gradually increases during egg maturation, reaching an average of 7-10 phosphates per monomer, so that at the time of fertilization the activity of the protein is maximum. Post-translationally, methylated by prmt5, yielding both monomethylated and symmetrically dimethylated Arg-192.

It localises to the nucleus. Its function is as follows. Acts as a chaperone for histones, such as histone H2A-H2B, and thus regulates the assembly of nucleosome cores. Involved in chromatin remodeling, especially during fertilization and early embryonic development. May be involved in sperm chromatin decondensation during fertilization. This Xenopus laevis (African clawed frog) protein is Nucleoplasmin.